A 324-amino-acid chain; its full sequence is Heat-inducible transcription repressor HrcA (324 aa).

Belongs to the HrcA family.

In terms of biological role, negative regulator of class I heat shock genes (grpE-dnaK-dnaJ and groELS operons). Prevents heat-shock induction of these operons. This chain is Heat-inducible transcription repressor HrcA, found in Parasynechococcus marenigrum (strain WH8102).